A 145-amino-acid chain; its full sequence is Large ribosomal subunit protein uL13 (145 aa).

This sequence belongs to the universal ribosomal protein uL13 family. Part of the 50S ribosomal subunit.

Its function is as follows. This protein is one of the early assembly proteins of the 50S ribosomal subunit, although it is not seen to bind rRNA by itself. It is important during the early stages of 50S assembly. The polypeptide is Large ribosomal subunit protein uL13 (Exiguobacterium sibiricum (strain DSM 17290 / CCUG 55495 / CIP 109462 / JCM 13490 / 255-15)).